Here is a 310-residue protein sequence, read N- to C-terminus: Ribonuclease Z (310 aa).

Zn(2+) is bound by residues histidine 64, histidine 66, aspartate 68, histidine 69, histidine 146, aspartate 215, and histidine 273. Aspartate 68 functions as the Proton acceptor in the catalytic mechanism.

The protein belongs to the RNase Z family. In terms of assembly, homodimer. Requires Zn(2+) as cofactor.

It carries out the reaction Endonucleolytic cleavage of RNA, removing extra 3' nucleotides from tRNA precursor, generating 3' termini of tRNAs. A 3'-hydroxy group is left at the tRNA terminus and a 5'-phosphoryl group is left at the trailer molecule.. In terms of biological role, zinc phosphodiesterase, which displays some tRNA 3'-processing endonuclease activity. Probably involved in tRNA maturation, by removing a 3'-trailer from precursor tRNA. The polypeptide is Ribonuclease Z (Aeropyrum pernix (strain ATCC 700893 / DSM 11879 / JCM 9820 / NBRC 100138 / K1)).